The chain runs to 239 residues: Splicing factor U2AF 35 kDa subunit (239 aa).

Ala2 carries the N-acetylalanine modification. The segment at 12-40 (EKDKVNCSFYFKIGACRHGDRCSRLHNKP) adopts a C3H1-type 1 zinc-finger fold. Lys39 is modified (N6-methyllysine). 2 positions are modified to phosphoserine: Ser61 and Ser145. Residues 65-147 (LRCAVSDVEM…QPIHAELSPV (83 aa)) form the RRM domain. A C3H1-type 2 zinc finger spans residues 149-176 (DFREACCRQYEMGECTRGGFCNFMHLKP). Arg165 carries the omega-N-methylarginine modification. Positions 183–239 (RELYGRRRKKHRSRSRSRERRSRSRDRGRGGGGGGGGGGGRERDRRRSRDRERSGRF) are disordered. The span at 188–208 (RRRKKHRSRSRSRERRSRSRD) shows a compositional bias: basic residues. A compositionally biased stretch (gly residues) spans 212–221 (GGGGGGGGGG). The segment covering 222–239 (GRERDRRRSRDRERSGRF) has biased composition (basic and acidic residues).

It belongs to the splicing factor SR family. Identified in the spliceosome C complex. Heterodimer with U2AF2. Interacts (via RS domain) with PHF5A (via N-terminus). Interacts with ZRANB2. Interacts with SDE2. Interacts with SF3B1. Expressed in primary spermatocytes and elongating spermatids (at protein level).

The protein localises to the nucleus. It localises to the nucleus speckle. Its function is as follows. Plays a critical role in both constitutive and enhancer-dependent splicing by mediating protein-protein interactions and protein-RNA interactions required for accurate 3'-splice site selection. Recruits U2 snRNP to the branch point. Directly mediates interactions between U2AF2 and proteins bound to the enhancers and thus may function as a bridge between U2AF2 and the enhancer complex to recruit it to the adjacent intron. In Mus musculus (Mouse), this protein is Splicing factor U2AF 35 kDa subunit (U2af1).